The sequence spans 273 residues: 4-hydroxy-tetrahydrodipicolinate reductase (273 aa).

12-17 is a binding site for NAD(+); it reads GANGRM. Arg39 serves as a coordination point for NADP(+). Residues 102-104 and 126-129 contribute to the NAD(+) site; these read GTT and AANF. His159 (proton donor/acceptor) is an active-site residue. (S)-2,3,4,5-tetrahydrodipicolinate is bound at residue His160. The active-site Proton donor is the Lys163. (S)-2,3,4,5-tetrahydrodipicolinate is bound at residue 169-170; the sequence is GT.

This sequence belongs to the DapB family. As to quaternary structure, homotetramer.

Its subcellular location is the cytoplasm. It carries out the reaction (S)-2,3,4,5-tetrahydrodipicolinate + NAD(+) + H2O = (2S,4S)-4-hydroxy-2,3,4,5-tetrahydrodipicolinate + NADH + H(+). The enzyme catalyses (S)-2,3,4,5-tetrahydrodipicolinate + NADP(+) + H2O = (2S,4S)-4-hydroxy-2,3,4,5-tetrahydrodipicolinate + NADPH + H(+). It functions in the pathway amino-acid biosynthesis; L-lysine biosynthesis via DAP pathway; (S)-tetrahydrodipicolinate from L-aspartate: step 4/4. Catalyzes the conversion of 4-hydroxy-tetrahydrodipicolinate (HTPA) to tetrahydrodipicolinate. In Cronobacter sakazakii (strain ATCC BAA-894) (Enterobacter sakazakii), this protein is 4-hydroxy-tetrahydrodipicolinate reductase.